A 473-amino-acid polypeptide reads, in one-letter code: Photosystem II CP43 reaction center protein (473 aa).

A propeptide spanning residues 1 to 14 (MKTLYSLRRFYPVE) is cleaved from the precursor. N-acetylthreonine is present on Thr15. At Thr15 the chain carries Phosphothreonine. Transmembrane regions (helical) follow at residues 69–93 (LFEV…PHLA), 134–155 (LLGP…KDRN), 178–200 (KALS…RKIT), 255–275 (KPFA…LSYS), and 291–312 (WFNN…ASQA). A [CaMn4O5] cluster-binding site is contributed by Glu367. The chain crosses the membrane as a helical span at residues 447–471 (RARAAAAGFEKGIDRDFEPVLSMTP).

The protein belongs to the PsbB/PsbC family. PsbC subfamily. PSII is composed of 1 copy each of membrane proteins PsbA, PsbB, PsbC, PsbD, PsbE, PsbF, PsbH, PsbI, PsbJ, PsbK, PsbL, PsbM, PsbT, PsbX, PsbY, PsbZ, Psb30/Ycf12, at least 3 peripheral proteins of the oxygen-evolving complex and a large number of cofactors. It forms dimeric complexes. Binds multiple chlorophylls and provides some of the ligands for the Ca-4Mn-5O cluster of the oxygen-evolving complex. It may also provide a ligand for a Cl- that is required for oxygen evolution. PSII binds additional chlorophylls, carotenoids and specific lipids. is required as a cofactor.

The protein localises to the plastid. Its subcellular location is the chloroplast thylakoid membrane. One of the components of the core complex of photosystem II (PSII). It binds chlorophyll and helps catalyze the primary light-induced photochemical processes of PSII. PSII is a light-driven water:plastoquinone oxidoreductase, using light energy to abstract electrons from H(2)O, generating O(2) and a proton gradient subsequently used for ATP formation. This is Photosystem II CP43 reaction center protein from Pelargonium hortorum (Common geranium).